The following is a 293-amino-acid chain: Group 3 late-embryogenesis abundant protein, mitochondrial (293 aa).

A mitochondrion-targeting transit peptide spans 1 to 31 (MFLARNAGRAGYRGVVAYQQAASFSVSSAKA). Low complexity predominate over residues 27 to 43 (SSAKAAGSRSSGGSDAG). The tract at residues 27 to 52 (SSAKAAGSRSSGGSDAGDYAREAAEH) is disordered. LEA 11-mer repeat repeat units lie at residues 58 to 68 (KDLKNEASWKA), 83 to 93 (KDTVKEGVHDM), 123 to 133 (KNAAQDTAATL), 134 to 144 (KDKAGSAWNQA), 145 to 155 (KHVVEDKGEDV), 160 to 170 (KDTASKVWGKA), 171 to 181 (KHVAEDVKENA), 199 to 209 (KDKAADVLSGA), and 210 to 220 (KHTAENLAHKA). The segment at 217-293 (AHKAQAAIHD…KGPGQAGGRR (77 aa)) is disordered. A compositionally biased stretch (low complexity) spans 230–265 (SSGSQSQSQSQSQYRQGQQQGRQDQQQSKSQWGQTS). The span at 279–293 (GPQGGKGPGQAGGRR) shows a compositional bias: gly residues.

The protein belongs to the LEA type 4 family.

The protein localises to the mitochondrion. In terms of biological role, mitochondrial heat soluble protein acting as a molecular shield in water-deficient condition. The protein is Group 3 late-embryogenesis abundant protein, mitochondrial of Ramazzottius varieornatus (Water bear).